Reading from the N-terminus, the 152-residue chain is Deoxyuridine 5'-triphosphate nucleotidohydrolase (152 aa).

Substrate is bound by residues 72-74 (RSG), asparagine 85, 89-91 (TID), and lysine 99.

This sequence belongs to the dUTPase family. Mg(2+) is required as a cofactor.

The enzyme catalyses dUTP + H2O = dUMP + diphosphate + H(+). It participates in pyrimidine metabolism; dUMP biosynthesis; dUMP from dCTP (dUTP route): step 2/2. This enzyme is involved in nucleotide metabolism: it produces dUMP, the immediate precursor of thymidine nucleotides and it decreases the intracellular concentration of dUTP so that uracil cannot be incorporated into DNA. This chain is Deoxyuridine 5'-triphosphate nucleotidohydrolase, found in Bradyrhizobium diazoefficiens (strain JCM 10833 / BCRC 13528 / IAM 13628 / NBRC 14792 / USDA 110).